A 319-amino-acid chain; its full sequence is Acetyl-coenzyme A carboxylase carboxyl transferase subunit alpha (319 aa).

The region spanning 39–293 is the CoA carboxyltransferase C-terminal domain; sequence KLEQKAAQLL…GDAIAEELKG (255 aa).

This sequence belongs to the AccA family. In terms of assembly, acetyl-CoA carboxylase is a heterohexamer composed of biotin carboxyl carrier protein (AccB), biotin carboxylase (AccC) and two subunits each of ACCase subunit alpha (AccA) and ACCase subunit beta (AccD).

The protein localises to the cytoplasm. It carries out the reaction N(6)-carboxybiotinyl-L-lysyl-[protein] + acetyl-CoA = N(6)-biotinyl-L-lysyl-[protein] + malonyl-CoA. Its pathway is lipid metabolism; malonyl-CoA biosynthesis; malonyl-CoA from acetyl-CoA: step 1/1. In terms of biological role, component of the acetyl coenzyme A carboxylase (ACC) complex. First, biotin carboxylase catalyzes the carboxylation of biotin on its carrier protein (BCCP) and then the CO(2) group is transferred by the carboxyltransferase to acetyl-CoA to form malonyl-CoA. The sequence is that of Acetyl-coenzyme A carboxylase carboxyl transferase subunit alpha from Parvibaculum lavamentivorans (strain DS-1 / DSM 13023 / NCIMB 13966).